A 309-amino-acid chain; its full sequence is 4-hydroxy-3-methylbut-2-enyl diphosphate reductase (309 aa).

Residue Cys12 coordinates [4Fe-4S] cluster. His41 and His74 together coordinate (2E)-4-hydroxy-3-methylbut-2-enyl diphosphate. Dimethylallyl diphosphate contacts are provided by His41 and His74. 2 residues coordinate isopentenyl diphosphate: His41 and His74. Residue Cys96 participates in [4Fe-4S] cluster binding. His124 provides a ligand contact to (2E)-4-hydroxy-3-methylbut-2-enyl diphosphate. Dimethylallyl diphosphate is bound at residue His124. Isopentenyl diphosphate is bound at residue His124. Glu126 functions as the Proton donor in the catalytic mechanism. Residue Thr167 participates in (2E)-4-hydroxy-3-methylbut-2-enyl diphosphate binding. Cys197 contacts [4Fe-4S] cluster. The (2E)-4-hydroxy-3-methylbut-2-enyl diphosphate site is built by Ser225, Ser226, Asn227, and Ser269. Dimethylallyl diphosphate contacts are provided by Ser225, Ser226, Asn227, and Ser269. Positions 225, 226, 227, and 269 each coordinate isopentenyl diphosphate.

The protein belongs to the IspH family. Requires [4Fe-4S] cluster as cofactor.

The enzyme catalyses isopentenyl diphosphate + 2 oxidized [2Fe-2S]-[ferredoxin] + H2O = (2E)-4-hydroxy-3-methylbut-2-enyl diphosphate + 2 reduced [2Fe-2S]-[ferredoxin] + 2 H(+). It catalyses the reaction dimethylallyl diphosphate + 2 oxidized [2Fe-2S]-[ferredoxin] + H2O = (2E)-4-hydroxy-3-methylbut-2-enyl diphosphate + 2 reduced [2Fe-2S]-[ferredoxin] + 2 H(+). It functions in the pathway isoprenoid biosynthesis; dimethylallyl diphosphate biosynthesis; dimethylallyl diphosphate from (2E)-4-hydroxy-3-methylbutenyl diphosphate: step 1/1. Its pathway is isoprenoid biosynthesis; isopentenyl diphosphate biosynthesis via DXP pathway; isopentenyl diphosphate from 1-deoxy-D-xylulose 5-phosphate: step 6/6. Functionally, catalyzes the conversion of 1-hydroxy-2-methyl-2-(E)-butenyl 4-diphosphate (HMBPP) into a mixture of isopentenyl diphosphate (IPP) and dimethylallyl diphosphate (DMAPP). Acts in the terminal step of the DOXP/MEP pathway for isoprenoid precursor biosynthesis. This chain is 4-hydroxy-3-methylbut-2-enyl diphosphate reductase, found in Shewanella pealeana (strain ATCC 700345 / ANG-SQ1).